The chain runs to 342 residues: L-threonine 3-dehydrogenase (342 aa).

Position 38 (cysteine 38) interacts with Zn(2+). Active-site charge relay system residues include threonine 40 and histidine 43. Residues histidine 63, glutamate 64, cysteine 93, cysteine 96, cysteine 99, and cysteine 107 each contribute to the Zn(2+) site. NAD(+)-binding positions include isoleucine 175, aspartate 195, arginine 200, 262-264 (LGL), and 286-287 (IY).

This sequence belongs to the zinc-containing alcohol dehydrogenase family. In terms of assembly, homotetramer. Zn(2+) serves as cofactor.

It is found in the cytoplasm. The catalysed reaction is L-threonine + NAD(+) = (2S)-2-amino-3-oxobutanoate + NADH + H(+). The protein operates within amino-acid degradation; L-threonine degradation via oxydo-reductase pathway; glycine from L-threonine: step 1/2. In terms of biological role, catalyzes the NAD(+)-dependent oxidation of L-threonine to 2-amino-3-ketobutyrate. The sequence is that of L-threonine 3-dehydrogenase from Streptomyces avermitilis (strain ATCC 31267 / DSM 46492 / JCM 5070 / NBRC 14893 / NCIMB 12804 / NRRL 8165 / MA-4680).